A 474-amino-acid chain; its full sequence is 6-phospho-beta-galactosidase (474 aa).

Gln-19, His-116, Asn-159, Glu-160, and Asn-297 together coordinate D-galactose 6-phosphate. Glu-160 acts as the Proton donor in catalysis. Glu-375 serves as the catalytic Nucleophile. Ser-433, Trp-434, Lys-440, and Tyr-442 together coordinate D-galactose 6-phosphate.

It belongs to the glycosyl hydrolase 1 family.

The catalysed reaction is a 6-phospho-beta-D-galactoside + H2O = D-galactose 6-phosphate + an alcohol. Its pathway is carbohydrate metabolism; lactose degradation; D-galactose 6-phosphate and beta-D-glucose from lactose 6-phosphate: step 1/1. The protein is 6-phospho-beta-galactosidase of Lacticaseibacillus rhamnosus (Lactobacillus rhamnosus).